Consider the following 282-residue polypeptide: Bifunctional protein FolD (282 aa).

NADP(+) contacts are provided by residues Gly-164 to Ser-166, Ile-189, and Ile-230.

Belongs to the tetrahydrofolate dehydrogenase/cyclohydrolase family. In terms of assembly, homodimer.

It catalyses the reaction (6R)-5,10-methylene-5,6,7,8-tetrahydrofolate + NADP(+) = (6R)-5,10-methenyltetrahydrofolate + NADPH. It carries out the reaction (6R)-5,10-methenyltetrahydrofolate + H2O = (6R)-10-formyltetrahydrofolate + H(+). Its pathway is one-carbon metabolism; tetrahydrofolate interconversion. Catalyzes the oxidation of 5,10-methylenetetrahydrofolate to 5,10-methenyltetrahydrofolate and then the hydrolysis of 5,10-methenyltetrahydrofolate to 10-formyltetrahydrofolate. The chain is Bifunctional protein FolD from Campylobacter jejuni (strain RM1221).